A 259-amino-acid polypeptide reads, in one-letter code: Ovulation prohormone (259 aa).

The signal sequence occupies residues 1–34; it reads MKMSGLLSKPDYGVVGIVFTVVFCCWCSSSTTHA. A propeptide spanning residues 35-102 is cleaved from the precursor; that stretch reads LSIAEPGRDR…SGEKTRLTAA (68 aa). The segment at 42–103 is disordered; the sequence is RDRYDKRSPT…GEKTRLTAAK (62 aa). 2 repeats span residues 119–123 and 146–150; these read RLRFH. Residues 119 to 150 form a 2 X 5 AA repeats of R-L-R-F-H region; sequence RLRFHKRRVDSADESNDDGFDRKAREPRLRFH. Positions 149-197 are disordered; it reads FHDVRKRSATAEEGSENAEIEESHLGNSRSRRSAGSAPSSANEVQRSKR. A propeptide spanning residues 181–195 is cleaved from the precursor; sequence SAGSAPSSANEVQRS. Position 233 is a leucine amide (L233). The propeptide occupies 237 to 259; sequence GSAFFDHIPIIFGEPQYDYQPFK.

It belongs to the molluscan ELH family.

The protein localises to the secreted. Functionally, CDCH induces ovulation and egg-mass production; it may also stimulate synthesis of secretory products in the female accessory sex glands and affect neurons in the neuronal circuits controlling locomotion and feeding. Calfluxin is involved in the influx of calcium into mitochondria of the albumen gland. In terms of biological role, CDCA (or alpha-CDCP) triggers the electrical activity of the caudodorsal cells (CDCS). This is Ovulation prohormone from Lymnaea stagnalis (Great pond snail).